Consider the following 167-residue polypeptide: Peptide deformylase (167 aa).

Positions 91 and 133 each coordinate Fe cation. Glu-134 is a catalytic residue. Residue His-137 participates in Fe cation binding.

This sequence belongs to the polypeptide deformylase family. It depends on Fe(2+) as a cofactor.

The enzyme catalyses N-terminal N-formyl-L-methionyl-[peptide] + H2O = N-terminal L-methionyl-[peptide] + formate. In terms of biological role, removes the formyl group from the N-terminal Met of newly synthesized proteins. Requires at least a dipeptide for an efficient rate of reaction. N-terminal L-methionine is a prerequisite for activity but the enzyme has broad specificity at other positions. The sequence is that of Peptide deformylase from Buchnera aphidicola subsp. Schizaphis graminum (strain Sg).